A 201-amino-acid chain; its full sequence is Protease (201 aa).

Catalysis depends on residues histidine 55, aspartate 72, and cysteine 122.

It belongs to the peptidase C5 family. As to quaternary structure, interacts with protease cofactor pVI-C; this interaction is necessary for protease activation.

Its subcellular location is the virion. It localises to the host nucleus. It carries out the reaction Cleaves proteins of the adenovirus and its host cell at two consensus sites: -Yaa-Xaa-Gly-Gly-|-Xaa- and -Yaa-Xaa-Gly-Xaa-|-Gly- (in which Yaa is Met, Ile or Leu, and Xaa is any amino acid).. Requires DNA and protease cofactor for maximal activation. Inside nascent virions, becomes partially activated by binding to the viral DNA, allowing it to cleave the cofactor that binds to the protease and fully activates it. Actin, like the viral protease cofactor, seems to act as a cofactor in the cleavage of cytokeratin 18 and of actin itself. Functionally, cleaves viral precursor proteins (pTP, pIIIa, pVI, pVII, pVIII, and pX) inside newly assembled particles giving rise to mature virions. Protease complexed to its cofactor slides along the viral DNA to specifically locate and cleave the viral precursors. Mature virions have a weakened organization compared to the unmature virions, thereby facilitating subsequent uncoating. Without maturation, the particle lacks infectivity and is unable to uncoat. Late in adenovirus infection, in the cytoplasm, may participate in the cytoskeleton destruction. Cleaves host cell cytoskeletal keratins K7 and K18. The protein is Protease of Bovine adenovirus 4 (BAdV-4).